The following is a 618-amino-acid chain: DELLA protein SLN1 (618 aa).

Positions 1–36 (MKREYQDGGGSGGGGDEMGSSRDKMMVSSSEAGEGE) are disordered. Gly residues predominate over residues 7 to 17 (DGGGSGGGGDE). Positions 39–43 (DELLA) match the DELLA motif motif. Disordered stretches follow at residues 106-137 (LNAP…YFDL) and 159-197 (APAD…GAAR). Pro residues predominate over residues 108–118 (APPPPLPPAPP). Low complexity-rich tracts occupy residues 119-128 (QLNASTSSTV) and 176-197 (TGGS…GAAR). In terms of domain architecture, GRAS spans 221–614 (VDTQEAGIRL…RPLIATSAWR (394 aa)). The leucine repeat I (LRI) stretch occupies residues 228-284 (IRLVHALLACAEAVQQENLSAAEALVKQIPLLAASQGGAMRKVAAYFGEALARRVFR). A LxCxE motif motif is present at residues 235–239 (LACAE). Positions 303-368 (HAHFYESCPY…GGPPSFRLTG (66 aa)) are VHIID. The VHIID signature appears at 334–338 (VHVVD). The leucine repeat II (LRII) stretch occupies residues 382 to 421 (QVGWKLAQFAHTIRVDFQYRGLVAATLADLEPFMLQPEGE). Residues 431–535 (IAVNSVFEMH…EVYLGRQICN (105 aa)) are PFYRE. Residues 538-614 (ACEGTERTER…RPLIATSAWR (77 aa)) form an SAW region.

This sequence belongs to the GRAS family. DELLA subfamily. Phosphorylated. In terms of processing, ubiquitinated. Upon GA application it is ubiquitinated, leading to its subsequent degradation. Apparently restricted to regions where growth is occurring in the leaf blade. Localizes almost exclusively to the basal elongation zone (EZ) for the elongating blades of L1, L2 and L3. More detailed fractionation of the L3 blade shows that in cv. Himalaya, it is preferentially localized to the basal third of the EZ, but its presence can still be detected toward the end of the EZ (at protein level).

It localises to the nucleus. Its function is as follows. Probable transcriptional regulator that acts as a repressor of the gibberellin (GA) signaling pathway. Probably acts by participating in large multiprotein complexes that repress transcription of GA-inducible genes. Upon GA application, it is degraded by the proteasome, allowing the GA signaling pathway. Acts as a negative regulator of GAMYB gene expression. This chain is DELLA protein SLN1 (SLN1), found in Hordeum vulgare (Barley).